The chain runs to 277 residues: E3 ubiquitin-protein ligase CCNB1IP1 (277 aa).

The segment at 4-51 (CEDMLLCNYRKCRIKLSGYAWVTACSHIFCDQHGSGEFSRSPAICPAC) adopts an RING-type; atypical zinc-finger fold. A coiled-coil region spans residues 127–182 (QQIQSKDVELTSMKGEVTSMKKVLEEYKKKFSDISEKLMERNRQYQKLQGLYDSLR).

In terms of assembly, interacts with CCNB1, UBE2L3 and NF2. Ubiquitinated; autoubiquitinated. In terms of processing, phosphorylated by CDK1 on serine or threonine residues (in vitro). As to expression, highly expressed in heart. Detected at intermediate levels in liver and kidney, and at low levels in placenta, brain and lung.

The protein resides in the nucleus. Its subcellular location is the chromosome. The catalysed reaction is S-ubiquitinyl-[E2 ubiquitin-conjugating enzyme]-L-cysteine + [acceptor protein]-L-lysine = [E2 ubiquitin-conjugating enzyme]-L-cysteine + N(6)-ubiquitinyl-[acceptor protein]-L-lysine.. It participates in protein modification; protein ubiquitination. Ubiquitin E3 ligase that acts as a limiting factor for crossing-over during meiosis: required during zygonema to limit the colocalization of RNF212 with MutS-gamma-associated recombination sites and thereby establish early differentiation of crossover and non-crossover sites. Later, it is directed by MutL-gamma to stably accumulate at designated crossover sites. Probably promotes the dissociation of RNF212 and MutS-gamma to allow the progression of recombination and the implementation of the final steps of crossing over. Modulates cyclin-B levels and participates in the regulation of cell cycle progression through the G2 phase. Overexpression causes delayed entry into mitosis. The sequence is that of E3 ubiquitin-protein ligase CCNB1IP1 (CCNB1IP1) from Homo sapiens (Human).